The chain runs to 371 residues: Dihydroorotate dehydrogenase (quinone) (371 aa).

FMN is bound by residues 79-83 (AGFDK) and Thr103. Lys83 provides a ligand contact to substrate. Position 128-132 (128-132 (NRMGF)) interacts with substrate. The FMN site is built by Asn156 and Asn189. Asn189 contributes to the substrate binding site. The Nucleophile role is filled by Ser192. Asn194 serves as a coordination point for substrate. FMN is bound by residues Lys225 and Thr253. 254–255 (NT) provides a ligand contact to substrate. FMN is bound by residues Gly279, Gly308, and 329-330 (YT).

It belongs to the dihydroorotate dehydrogenase family. Type 2 subfamily. In terms of assembly, monomer. It depends on FMN as a cofactor.

It is found in the cell membrane. It carries out the reaction (S)-dihydroorotate + a quinone = orotate + a quinol. It functions in the pathway pyrimidine metabolism; UMP biosynthesis via de novo pathway; orotate from (S)-dihydroorotate (quinone route): step 1/1. Its function is as follows. Catalyzes the conversion of dihydroorotate to orotate with quinone as electron acceptor. The polypeptide is Dihydroorotate dehydrogenase (quinone) (Corynebacterium glutamicum (strain ATCC 13032 / DSM 20300 / JCM 1318 / BCRC 11384 / CCUG 27702 / LMG 3730 / NBRC 12168 / NCIMB 10025 / NRRL B-2784 / 534)).